Reading from the N-terminus, the 512-residue chain is Maturase K (512 aa).

It belongs to the intron maturase 2 family. MatK subfamily.

It localises to the plastid. The protein localises to the chloroplast. Its function is as follows. Usually encoded in the trnK tRNA gene intron. Probably assists in splicing its own and other chloroplast group II introns. This chain is Maturase K, found in Acer platanoides (Norway maple).